A 292-amino-acid chain; its full sequence is Insulin-like growth factor-binding protein 3 (292 aa).

An N-terminal signal peptide occupies residues 1–27 (MHPARPALWAAALTALTLLRGPPVARA). An IGFBP N-terminal domain is found at 36–119 (PVVRCEPCDA…LNGRGFCANA (84 aa)). 6 disulfides stabilise this stretch: Cys-40-Cys-69, Cys-43-Cys-71, Cys-51-Cys-72, Cys-60-Cys-75, Cys-83-Cys-96, and Cys-90-Cys-116. Asn-118, Asn-124, and Asn-137 each carry an N-linked (GlcNAc...) asparagine glycan. Disordered regions lie at residues 127–161 (AYLP…THRV) and 191–211 (YESQ…ETEY). Over residues 129-139 (LPSQPSPGNTT) the composition is skewed to polar residues. Ser-149 carries the post-translational modification Phosphoserine. Residues 192–203 (ESQSTDTQNFSS) show a composition bias toward polar residues. Asn-200 carries N-linked (GlcNAc...) asparagine glycosylation. The residue at position 202 (Ser-202) is a Phosphoserine. Residues 211-286 (YGPCRREMED…DTKGKDDVHC (76 aa)) enclose the Thyroglobulin type-1 domain. Cystine bridges form between Cys-214-Cys-241, Cys-252-Cys-263, and Cys-265-Cys-286.

Interacts with XLKD1. Binds IGF2 more than IGF1. Forms a ternary complex of about 140 to 150 kDa with IGF1 or IGF2 and a 85 kDa glycoprotein (ALS). Interacts with humanin; humanin competes with importin KPNB1 for binding to IGFBP3, blocking IGFBP3 nuclear import and IGFBP3-mediated apoptosis. Interacts with TMEM219. Interacts with RXRA; this interaction modulates the transcriptional activity of RXRA. Interacts with LRP1; this interaction mediates cell growth inhibition independent of IGF1. Post-translationally, phosphorylated by FAM20C in the extracellular medium. Phosphorylated by CK2; resulting in decreased nuclear localization.

Its subcellular location is the secreted. It localises to the nucleus. Multifunctional protein that plays a critical role in regulating the availability of IGFs such as IGF1 and IGF2 to their receptors and thereby regulates IGF-mediated cellular processes including proliferation, differentiation, and apoptosis in a cell-type specific manner. Also exhibits IGF-independent antiproliferative and apoptotic effects mediated by its receptor TMEM219/IGFBP-3R. Inhibits the positive effect of humanin on insulin sensitivity. Promotes testicular germ cell apoptosis. Acts via LRP-1/alpha2M receptor, also known as TGF-beta type V receptor, to mediate cell growth inhibition independent of IGF1. Mechanistically, induces serine-specific dephosphorylation of IRS1 or IRS2 upon ligation to its receptor, leading to the inhibitory cascade. In the nucleus, interacts with transcription factors such as retinoid X receptor-alpha/RXRA to regulate transcriptional signaling and apoptosis. This is Insulin-like growth factor-binding protein 3 (Igfbp3) from Rattus norvegicus (Rat).